A 142-amino-acid polypeptide reads, in one-letter code: MGLKLNGRYISLILAVQIAYLVQAVRAAGKCDAVFKGFSDCLLKLGDSMANYPQGLDDKTNIKTVCTYWEDFHSCTVTALTDCQEGAKDMWDKLRKESKNLNIQGSLFELCGGGNGAAGPLLPALPVLLVSLSAALATWLSF.

The first 27 residues, 1–27 (MGLKLNGRYISLILAVQIAYLVQAVRA), serve as a signal peptide directing secretion. Gly116 is lipidated: GPI-anchor amidated glycine. The propeptide at 117 to 142 (AAGPLLPALPVLLVSLSAALATWLSF) is removed in mature form.

The protein belongs to the neuritin family. Component of the outer core of AMPAR complex. AMPAR complex consists of an inner core made of 4 pore-forming GluA/GRIA proteins (GRIA1, GRIA2, GRIA3 and GRIA4) and 4 major auxiliary subunits arranged in a twofold symmetry. One of the two pairs of distinct binding sites is occupied either by CNIH2, CNIH3 or CACNG2, CACNG3. The other harbors CACNG2, CACNG3, CACNG4, CACNG8 or GSG1L. This inner core of AMPAR complex is complemented by outer core constituents binding directly to the GluA/GRIA proteins at sites distinct from the interaction sites of the inner core constituents. Outer core constituents include at least PRRT1, PRRT2, CKAMP44/SHISA9, FRRS1L and NRN1. The proteins of the inner and outer core serve as a platform for other, more peripherally associated AMPAR constituents. Alone or in combination, these auxiliary subunits control the gating and pharmacology of the AMPAR complex and profoundly impact their biogenesis and protein processing.

The protein resides in the cell membrane. It is found in the synapse. In terms of biological role, promotes neurite outgrowth and especially branching of neuritic processes in primary hippocampal and cortical cells. This chain is Neuritin (NRN1), found in Bos taurus (Bovine).